Reading from the N-terminus, the 131-residue chain is Small ribosomal subunit protein uS8 (131 aa).

Belongs to the universal ribosomal protein uS8 family. In terms of assembly, part of the 30S ribosomal subunit. Contacts proteins S5 and S12.

Its function is as follows. One of the primary rRNA binding proteins, it binds directly to 16S rRNA central domain where it helps coordinate assembly of the platform of the 30S subunit. The polypeptide is Small ribosomal subunit protein uS8 (Ruminiclostridium cellulolyticum (strain ATCC 35319 / DSM 5812 / JCM 6584 / H10) (Clostridium cellulolyticum)).